The primary structure comprises 686 residues: MPASSVRLPLRLLTLAGLLALAGAAALARGAPQGGPPSPQGGPAPTAAPARGPTLFVLVGDGSARFVFQLGGLGALNDTRIRGHLLGRYLVSYQVVPPPVSAWYFVQRPRERPRLSGPPSGAELVAFDAPGVRRTYTTAAVWPAEVAVLADAEARCPAAVFNVTLGEAFLGLRVALRSFLPLEVIISAERMRMIAPPALGADLEPPGPPAGRFHVYTLGFLSDGAMHQTMRDVAAYVHESDDYLAQLSAAHAAALAAVVQPGPYYFYRAAVRLGVAAFVFSEAARRDRRASAPALLRVESDARLLSRLLMRAAGCPAGFAGLFDGRAERVPVAPADQLRAAWTFGEDPAPRLDLARATVAEAYRRSVRGKPFDQQALFFAVALLLRAGGPGDARETLLRTTAMCTAERAAAAAELTRAALSPTAAWNEPFSLLDVLSPCAVSLRRDLGGDATLANLGAAARLALAPAGAPGAAAATDGGAEEEEEDPVARAAPEIPAEALLALPLRGGASFVFTRRRPDCGPAYTLGGVDIANPLVLALVSNDSAACDYTDRMPESQHLPATDNPSVCVYCDCVFVRYSSAGTILETVLIESKDMEEQLMAGANSTIPSFNPTLHGGDVKALMLFPNGTVVDLLSFTSTRLAPVSPAYVVASVVGAAITVGILYALFKMLCSFSSEGYSRLINARS.

An N-terminal signal peptide occupies residues 1 to 24 (MPASSVRLPLRLLTLAGLLALAGA). Over 25–646 (AALARGAPQG…TSTRLAPVSP (622 aa)) the chain is Virion surface. Asn-77, Asn-162, Asn-542, Asn-604, and Asn-627 each carry an N-linked (GlcNAc...) asparagine; by host glycan. The segment at 157–217 (PAAVFNVTLG…PPAGRFHVYT (61 aa)) is interaction with gL. Residues 647-667 (AYVVASVVGAAITVGILYALF) form a helical membrane-spanning segment. The Intravirion segment spans residues 668–686 (KMLCSFSSEGYSRLINARS).

The protein belongs to the herpesviridae glycoprotein H family. Interacts with glycoprotein L (gL); this interaction is necessary for the correct processing and cell surface expression of gH. The heterodimer gH/gL seems to interact with gB trimers during fusion. In terms of processing, N-glycosylated, O-glycosylated, and sialylated.

The protein localises to the virion membrane. The protein resides in the host cell membrane. It is found in the host endosome membrane. The heterodimer glycoprotein H-glycoprotein L is required for the fusion of viral and plasma membranes leading to virus entry into the host cell. Following initial binding to host receptor, membrane fusion is mediated by the fusion machinery composed of gB and the heterodimer gH/gL. May also be involved in the fusion between the virion envelope and the outer nuclear membrane during virion morphogenesis. This is Envelope glycoprotein H from Sus scrofa (Pig).